Here is a 429-residue protein sequence, read N- to C-terminus: Glutamyl-tRNA reductase (429 aa).

Residues 52–55, Ser110, 115–117, and Gln121 contribute to the substrate site; these read TCNR and EAQ. Cys53 serves as the catalytic Nucleophile. 190–195 lines the NADP(+) pocket; it reads GAGAMI.

The protein belongs to the glutamyl-tRNA reductase family. As to quaternary structure, homodimer.

It carries out the reaction (S)-4-amino-5-oxopentanoate + tRNA(Glu) + NADP(+) = L-glutamyl-tRNA(Glu) + NADPH + H(+). Its pathway is porphyrin-containing compound metabolism; protoporphyrin-IX biosynthesis; 5-aminolevulinate from L-glutamyl-tRNA(Glu): step 1/2. Its function is as follows. Catalyzes the NADPH-dependent reduction of glutamyl-tRNA(Glu) to glutamate 1-semialdehyde (GSA). This Verminephrobacter eiseniae (strain EF01-2) protein is Glutamyl-tRNA reductase.